Reading from the N-terminus, the 226-residue chain is ATP-dependent dethiobiotin synthetase BioD (226 aa).

An ATP-binding site is contributed by 12–17 (GVGKTV). Threonine 16 contacts Mg(2+). Residue lysine 37 is part of the active site. Threonine 41 provides a ligand contact to substrate. ATP contacts are provided by residues aspartate 49, 108–111 (EGAG), and 169–170 (GS). Residues aspartate 49 and glutamate 108 each coordinate Mg(2+).

It belongs to the dethiobiotin synthetase family. Homodimer. Mg(2+) is required as a cofactor.

It localises to the cytoplasm. It catalyses the reaction (7R,8S)-7,8-diammoniononanoate + CO2 + ATP = (4R,5S)-dethiobiotin + ADP + phosphate + 3 H(+). It functions in the pathway cofactor biosynthesis; biotin biosynthesis; biotin from 7,8-diaminononanoate: step 1/2. Functionally, catalyzes a mechanistically unusual reaction, the ATP-dependent insertion of CO2 between the N7 and N8 nitrogen atoms of 7,8-diaminopelargonic acid (DAPA, also called 7,8-diammoniononanoate) to form a ureido ring. In Mycobacterium marinum (strain ATCC BAA-535 / M), this protein is ATP-dependent dethiobiotin synthetase BioD.